Reading from the N-terminus, the 928-residue chain is Tyrosine-protein phosphatase 3 (928 aa).

Thr75 bears the Phosphothreonine mark. One can recognise a Rhodanese domain in the interval 111-232 (PDEKVLLLDV…FKILFPDHIN (122 aa)). The tract at residues 247-307 (KSPKTNLMNS…PRNVLSDSPM (61 aa)) is disordered. Ser248 is subject to Phosphoserine. Polar residues-rich tracts occupy residues 249-259 (PKTNLMNSLHN) and 265-275 (TATTPLSSPQM). Over residues 280–289 (KVPDDSRSDH) the composition is skewed to basic and acidic residues. The span at 290–307 (SNFSSSPSPRNVLSDSPM) shows a compositional bias: low complexity. 2 positions are modified to phosphoserine: Ser297 and Ser368. 2 disordered regions span residues 467–487 (LTST…NKVQ) and 672–713 (MRKN…NNNN). The Tyrosine-protein phosphatase domain occupies 502–878 (YKSMLSLESD…IFIYDCLLFY (377 aa)). A compositionally biased stretch (polar residues) spans 672–691 (MRKNTMGTQNSSLYSAGVQG). A compositionally biased stretch (low complexity) spans 692–713 (NSSNYSTDNDNDNDNNNNNNNN). The Phosphocysteine intermediate role is filled by Cys804.

This sequence belongs to the protein-tyrosine phosphatase family. Non-receptor class subfamily. In terms of assembly, interacts with HOG1.

The protein resides in the cytoplasm. The enzyme catalyses O-phospho-L-tyrosyl-[protein] + H2O = L-tyrosyl-[protein] + phosphate. Functionally, major phosphatase responsible for tyrosine dephosphorylation of MAP kinases FUS3 and HOG1 to inactivate their activity; it also has important roles, along with MSG5, in the inactivation of FUS3 following pheromone stimulation. The sequence is that of Tyrosine-protein phosphatase 3 (PTP3) from Saccharomyces cerevisiae (strain ATCC 204508 / S288c) (Baker's yeast).